Here is a 626-residue protein sequence, read N- to C-terminus: tRNA uridine 5-carboxymethylaminomethyl modification enzyme MnmG (626 aa).

13 to 18 (GGGHAG) contacts FAD. Residue 273–287 (GPRYCPSIEDKIHRF) coordinates NAD(+).

It belongs to the MnmG family. In terms of assembly, homodimer. Heterotetramer of two MnmE and two MnmG subunits. The cofactor is FAD.

The protein localises to the cytoplasm. NAD-binding protein involved in the addition of a carboxymethylaminomethyl (cmnm) group at the wobble position (U34) of certain tRNAs, forming tRNA-cmnm(5)s(2)U34. The sequence is that of tRNA uridine 5-carboxymethylaminomethyl modification enzyme MnmG from Acinetobacter baumannii (strain ACICU).